Consider the following 243-residue polypeptide: Probable sentrin-specific protease 8 (243 aa).

Residues 12–185 (SAIYQSDINI…LYVLSIIEEL (174 aa)) form a protease region. Active-site residues include H109 and D126. C174 serves as the catalytic Nucleophile.

It belongs to the peptidase C48 family.

Protease that catalyzes two essential functions in the nedd8 pathway: processing of full-length nedd8 to its mature form and deconjugation of nedd8 from targeted proteins. This chain is Probable sentrin-specific protease 8 (senp8), found in Dictyostelium discoideum (Social amoeba).